We begin with the raw amino-acid sequence, 101 residues long: Small ribosomal subunit protein uS14 (101 aa).

A compositionally biased stretch (basic and acidic residues) spans 1–10 (MAKKSSIEKN). Residues 1–23 (MAKKSSIEKNNRRKRMVKNAAPK) are disordered.

Belongs to the universal ribosomal protein uS14 family. Part of the 30S ribosomal subunit. Contacts proteins S3 and S10.

Functionally, binds 16S rRNA, required for the assembly of 30S particles and may also be responsible for determining the conformation of the 16S rRNA at the A site. The protein is Small ribosomal subunit protein uS14 of Bradyrhizobium diazoefficiens (strain JCM 10833 / BCRC 13528 / IAM 13628 / NBRC 14792 / USDA 110).